Reading from the N-terminus, the 531-residue chain is MACLLSAAQRASAGVLFVALWGTVLGDRLLVVPQDGSHWLSMQDIVEALGARGHEIVVLVPEVNLLLRESRFYTRRIYPVPFDQEEQSYRYRTFGEKHFTDRSWLSGPQTEYRNNMVVIDMYFINCQSLLRHGDTLDFLRAGKFDALFTDPALPCGVILAEYLGLPSVYLFRGFPCSLEHGFGGSPNPVSYIPRCYTKFSDQMSFPQRVVNFLVNLLEVPLFYCLYSKYEDLAVELLKREVDLPTLFQKDPVWLLRYDFVFEYPRPVMPNMVLIGGINCKKPDVLSQEFEAYVNASGEHGIVVFSLGSMVSEIPEKKAMEIADALGKIPQTVLWRYTGSRPSNLAKNTYLVKWLPQNVLLGHPKTRAFITHSGSHGIYEGICNGVPMVMLPLFGDQMDNAKRIETRGAGVTLNVLEMTSDDLANALKTVINDKSYKENIMRLSSLHKDRPVEPLDLAVFWVEFVMRHKGAAPRPAAHDLTWYQYHSLDVIGFLLAIVLTVAFVTFKCCAFAWGKCFGKKGRVKKAHKSKVH.

The N-terminal stretch at 1–26 (MACLLSAAQRASAGVLFVALWGTVLG) is a signal peptide. N294 carries an N-linked (GlcNAc...) asparagine glycan. The helical transmembrane segment at 489–505 (VIGFLLAIVLTVAFVTF) threads the bilayer.

This sequence belongs to the UDP-glycosyltransferase family.

It is found in the microsome. Its subcellular location is the endoplasmic reticulum membrane. It catalyses the reaction glucuronate acceptor + UDP-alpha-D-glucuronate = acceptor beta-D-glucuronoside + UDP + H(+). The catalysed reaction is (5Z,8Z,11Z,14Z)-eicosatetraenoate + UDP-alpha-D-glucuronate = O-[(5Z),(8Z),(11Z),(14Z)-eicosatetraenoyl]-beta-D-glucuronate + UDP. It carries out the reaction 15-hydroxy-(5Z,8Z,11Z,13E)-eicosatetraenoate + UDP-alpha-D-glucuronate = 15-O-(beta-D-glucuronosyl)-(5Z,8Z,11Z,14Z)-eicosatetraenoate + UDP + H(+). The enzyme catalyses (E)-ferulate + UDP-alpha-D-glucuronate = (E)-4-O-(beta-D-glucuronosyl)-ferulate + UDP + H(+). It catalyses the reaction (E)-ferulate + UDP-alpha-D-glucuronate = (E)-ferulic acid beta-D-glucuronate ester + UDP. UDP-glucuronosyltransferase (UGT) that catalyzes phase II biotransformation reactions in which lipophilic substrates are conjugated with glucuronic acid to facilitate their inactivation and excretion from the body. Essential for the elimination and detoxification of drugs, xenobiotics and endogenous compounds. Involved in the glucuronidation of arachidonic acid (AA) and AA-derived eicosanoids including 15-HETE and 20-HETE. Conjugates small planar phenolic molecules such as 4-nitrophenol, 1-naphthol, and 4-methylumbelliferone. The bulky phenol 4-hydroxybiphenyl, androgens and estrogens are not substrates. 2-hydroxybiphenyl is an excellent substrate. Involved in the glucuronidation of the phytochemical ferulic acid at the phenolic or the carboxylic acid group. The polypeptide is UDP-glucuronosyltransferase 1A6 (UGT1) (Oryctolagus cuniculus (Rabbit)).